The chain runs to 474 residues: Glycogen synthase (474 aa).

Lys-12 contacts ADP-alpha-D-glucose.

It belongs to the glycosyltransferase 1 family. Bacterial/plant glycogen synthase subfamily.

It carries out the reaction [(1-&gt;4)-alpha-D-glucosyl](n) + ADP-alpha-D-glucose = [(1-&gt;4)-alpha-D-glucosyl](n+1) + ADP + H(+). It functions in the pathway glycan biosynthesis; glycogen biosynthesis. In terms of biological role, synthesizes alpha-1,4-glucan chains using ADP-glucose. This Xanthomonas axonopodis pv. citri (strain 306) protein is Glycogen synthase.